The following is a 479-amino-acid chain: Trigger factor (479 aa).

Residues 174 to 261 form the PPIase FKBP-type domain; the sequence is GDIAVVSFSG…LKELKTRELP (88 aa). The tract at residues 437–479 is disordered; the sequence is KVLESEAKTSKPAAKSKGSKTKSTKTKTNKAKTEKPASDKTKS. The span at 453 to 466 shows a compositional bias: basic residues; that stretch reads KGSKTKSTKTKTNK. Basic and acidic residues predominate over residues 467-479; sequence AKTEKPASDKTKS.

Belongs to the FKBP-type PPIase family. Tig subfamily.

The protein resides in the cytoplasm. The catalysed reaction is [protein]-peptidylproline (omega=180) = [protein]-peptidylproline (omega=0). Its function is as follows. Involved in protein export. Acts as a chaperone by maintaining the newly synthesized protein in an open conformation. Functions as a peptidyl-prolyl cis-trans isomerase. This is Trigger factor from Prochlorococcus marinus (strain MIT 9303).